We begin with the raw amino-acid sequence, 416 residues long: Peptide chain release factor subunit 1 (416 aa).

This sequence belongs to the eukaryotic release factor 1 family. Heterodimer of two subunits, one of which binds GTP.

It is found in the cytoplasm. Functionally, directs the termination of nascent peptide synthesis (translation) in response to the termination codons UAA, UAG and UGA. The polypeptide is Peptide chain release factor subunit 1 (Halorubrum lacusprofundi (strain ATCC 49239 / DSM 5036 / JCM 8891 / ACAM 34)).